A 410-amino-acid polypeptide reads, in one-letter code: Ribulose bisphosphate carboxylase large chain (410 aa).

Substrate-binding residues include Asn100 and Thr150. Lys152 serves as the catalytic Proton acceptor. Substrate is bound at residue Lys154. The Mg(2+) site is built by Lys178, Asp180, and Glu181. Lys178 is subject to N6-carboxylysine. The active-site Proton acceptor is His271. Residues Arg272, His304, and Ser356 each contribute to the substrate site.

The protein belongs to the RuBisCO large chain family. Type I subfamily. In terms of assembly, heterohexadecamer of 8 large chains and 8 small chains; disulfide-linked. The disulfide link is formed within the large subunit homodimers. Mg(2+) serves as cofactor. Post-translationally, the disulfide bond which can form in the large chain dimeric partners within the hexadecamer appears to be associated with oxidative stress and protein turnover.

The protein resides in the plastid. It is found in the chloroplast. It carries out the reaction 2 (2R)-3-phosphoglycerate + 2 H(+) = D-ribulose 1,5-bisphosphate + CO2 + H2O. The catalysed reaction is D-ribulose 1,5-bisphosphate + O2 = 2-phosphoglycolate + (2R)-3-phosphoglycerate + 2 H(+). In terms of biological role, ruBisCO catalyzes two reactions: the carboxylation of D-ribulose 1,5-bisphosphate, the primary event in carbon dioxide fixation, as well as the oxidative fragmentation of the pentose substrate in the photorespiration process. Both reactions occur simultaneously and in competition at the same active site. The polypeptide is Ribulose bisphosphate carboxylase large chain (rbcL) (Gleichenia japonica (Urajiro)).